A 293-amino-acid polypeptide reads, in one-letter code: Heterogeneous nuclear ribonucleoprotein C-like 1 (293 aa).

The RRM domain maps to 16-87 (SRVFIGNLNT…QVVDINLAAE (72 aa)). Disordered stretches follow at residues 137–177 (ALAV…KLKG) and 206–293 (KEQS…QDDS). Residues 177–225 (GDDLQAIKQELTQIKQKVDSLLENLEKIEKEQSKQEVEVKNAKSEEEQS) are a coiled coil. Basic and acidic residues-rich tracts occupy residues 206-222 (KEQS…KSEE) and 229-240 (MKKDETHVKMES). Acidic residues-rich tracts occupy residues 242 to 267 (GGAE…DDQL) and 275 to 284 (KEAEEGEDDR).

It belongs to the RRM HNRPC family. RALY subfamily.

Its subcellular location is the nucleus. Its function is as follows. May play a role in nucleosome assembly by neutralizing basic proteins such as A and B core hnRNPs. This Homo sapiens (Human) protein is Heterogeneous nuclear ribonucleoprotein C-like 1 (HNRNPCL1).